The following is an 824-amino-acid chain: ABC transporter B family member 7 (824 aa).

The disordered stretch occupies residues 41 to 101 (RNSVKFNLDT…NKNNKNKINN (61 aa)). The segment covering 63-101 (NNNKNNNNNNNNNNNNNNNNNNNNNNNNNNKNNKNKINN) has biased composition (low complexity). 6 consecutive transmembrane segments (helical) span residues 164-184 (IWYFVFAFLALSITTLCQLAL), 252-272 (WIIIIVLVQTPFLFARYLLFT), 325-345 (LSTLVRCSLQLIGGLLILVFL), 347-367 (WKVTLLMISFLVILLISFLVF), 431-451 (AFWISFGSLLVMGTIIGIYGF), and 461-481 (ILLLQFILYSLMITASMNGLI). Residues 167-489 (FVFAFLALSI…LIGSINEIQK (323 aa)) enclose the ABC transmembrane type-1 domain. The ABC transporter domain occupies 521-767 (ISFDNVYFNN…STSFYVTSVL (247 aa)). Residue 570 to 576 (GPSQSKE) coordinates ATP. The disordered stretch occupies residues 772–813 (NKYNNNNNNNNNNNNNNNNNNNNNNNNNNNNNNNNNNNNINN).

It belongs to the ABC transporter superfamily. ABCB family.

The protein localises to the membrane. The sequence is that of ABC transporter B family member 7 (abcB7) from Dictyostelium discoideum (Social amoeba).